The chain runs to 220 residues: Ribosomal RNA small subunit methyltransferase G (220 aa).

S-adenosyl-L-methionine-binding positions include Gly82, Leu87, 105-107 (DST), 133-134 (VE), and Arg147.

It belongs to the methyltransferase superfamily. RNA methyltransferase RsmG family.

It is found in the cytoplasm. Specifically methylates the N7 position of a guanine in 16S rRNA. This Chlorobium limicola (strain DSM 245 / NBRC 103803 / 6330) protein is Ribosomal RNA small subunit methyltransferase G.